A 340-amino-acid polypeptide reads, in one-letter code: Phosphoribosylformylglycinamidine cyclo-ligase (340 aa).

It belongs to the AIR synthase family.

The protein resides in the cytoplasm. It carries out the reaction 2-formamido-N(1)-(5-O-phospho-beta-D-ribosyl)acetamidine + ATP = 5-amino-1-(5-phospho-beta-D-ribosyl)imidazole + ADP + phosphate + H(+). Its pathway is purine metabolism; IMP biosynthesis via de novo pathway; 5-amino-1-(5-phospho-D-ribosyl)imidazole from N(2)-formyl-N(1)-(5-phospho-D-ribosyl)glycinamide: step 2/2. The sequence is that of Phosphoribosylformylglycinamidine cyclo-ligase from Streptococcus pneumoniae (strain P1031).